The chain runs to 307 residues: Ribosomal RNA small subunit methyltransferase H (307 aa).

S-adenosyl-L-methionine contacts are provided by residues 32-34, Asp-52, Phe-78, Asp-99, and Gln-106; that span reads GGH.

The protein belongs to the methyltransferase superfamily. RsmH family.

Its subcellular location is the cytoplasm. The catalysed reaction is cytidine(1402) in 16S rRNA + S-adenosyl-L-methionine = N(4)-methylcytidine(1402) in 16S rRNA + S-adenosyl-L-homocysteine + H(+). Functionally, specifically methylates the N4 position of cytidine in position 1402 (C1402) of 16S rRNA. The chain is Ribosomal RNA small subunit methyltransferase H from Acinetobacter baumannii (strain AB307-0294).